The following is a 148-amino-acid chain: Nucleoside diphosphate kinase 1 (148 aa).

Residues Lys9, Phe57, Arg85, Thr91, Arg102, and Asn112 each contribute to the ATP site. His115 serves as the catalytic Pros-phosphohistidine intermediate.

The protein belongs to the NDK family. Mg(2+) serves as cofactor. In terms of processing, the N-terminus is blocked.

The enzyme catalyses a 2'-deoxyribonucleoside 5'-diphosphate + ATP = a 2'-deoxyribonucleoside 5'-triphosphate + ADP. It catalyses the reaction a ribonucleoside 5'-diphosphate + ATP = a ribonucleoside 5'-triphosphate + ADP. Functionally, major role in the synthesis of nucleoside triphosphates other than ATP. The ATP gamma phosphate is transferred to the NDP beta phosphate via a ping-pong mechanism, using a phosphorylated active-site intermediate. This is Nucleoside diphosphate kinase 1 (NDPK1) from Spinacia oleracea (Spinach).